Here is a 412-residue protein sequence, read N- to C-terminus: CHRNA7-FAM7A fusion protein (412 aa).

The next 5 membrane-spanning stretches (helical) occupy residues 144-164 (GLNL…VFLL), 172-192 (ISLG…VAEI), 205-225 (QYFA…VIVL), 240-254 (WTRV…WFLR), and 380-400 (LCLM…LMSA).

It belongs to the ligand-gated ion channel (TC 1.A.9) family. In terms of tissue distribution, expressed in hippocampus.

The protein localises to the membrane. The polypeptide is CHRNA7-FAM7A fusion protein (CHRFAM7A) (Homo sapiens (Human)).